The chain runs to 434 residues: Probable phosphoglucosamine mutase (434 aa).

Serine 91 (phosphoserine intermediate) is an active-site residue. Residues serine 91, aspartate 229, aspartate 231, and aspartate 233 each contribute to the Mg(2+) site. Serine 91 bears the Phosphoserine mark.

Belongs to the phosphohexose mutase family. Mg(2+) is required as a cofactor. Activated by phosphorylation.

The enzyme catalyses alpha-D-glucosamine 1-phosphate = D-glucosamine 6-phosphate. Functionally, catalyzes the conversion of glucosamine-6-phosphate to glucosamine-1-phosphate. In Methanosarcina acetivorans (strain ATCC 35395 / DSM 2834 / JCM 12185 / C2A), this protein is Probable phosphoglucosamine mutase.